Consider the following 189-residue polypeptide: Ras-like protein rasG (189 aa).

10 to 17 (GGGGVGKS) contributes to the GTP binding site. Residues 32–40 (YDPTIEDSY) carry the Effector region motif. Residues 57–61 (DTAGQ) and 116–119 (NKCD) contribute to the GTP site. The segment at 169-189 (KGDSKPEKGKKKRPLKACTLL) is disordered. Cys186 bears the Cysteine methyl ester mark. A lipid anchor (S-geranylgeranyl cysteine) is attached at Cys186. The propeptide at 187 to 189 (TLL) is removed in mature form.

Belongs to the small GTPase superfamily. Ras family. In terms of assembly, interacts with ripA.

The protein localises to the cell membrane. It carries out the reaction GTP + H2O = GDP + phosphate + H(+). Alternates between an inactive form bound to GDP and an active form bound to GTP. Activated by a guanine nucleotide-exchange factor (GEF) and inactivated by a GTPase-activating protein (GAP). Its function is as follows. Ras proteins bind GDP/GTP and possess intrinsic GTPase activity. In Dictyostelium discoideum (Social amoeba), this protein is Ras-like protein rasG (rasG).